The following is a 330-amino-acid chain: Chromatin modification-related protein EAF3 (330 aa).

Positions 5 to 62 constitute a Tudor-knot domain; it reads DGEKVLCFHGPLIYAAKILKAEKWTGEENVTGQVGPHYLVHYDGWKKTWDEWVPETRL. Residues 96–129 are disordered; it reads TSAASSLKRAKDSELPDRKSASRGTKRSREHVEA. Basic and acidic residues predominate over residues 104 to 115; the sequence is RAKDSELPDRKS. In terms of domain architecture, MRG spans 135–329; sequence KRPEVKISLP…ASPAYHRISS (195 aa).

The protein belongs to the MRG family. In terms of assembly, component of the NuA4 histone acetyltransferase complex.

Its subcellular location is the nucleus. Involved in deacetylation of histones, chromatin assembly and chromosome segregation. May act as a transcriptional oscillator, directing histone deacetylases to specific chromosomal domains. Component of the NuA4 histone acetyltransferase complex which is involved in transcriptional activation of selected genes principally by acetylation of nucleosomal histone H4 and H2A. The NuA4 complex is also involved in DNA repair. The chain is Chromatin modification-related protein EAF3 (EAF3) from Mycosarcoma maydis (Corn smut fungus).